The chain runs to 285 residues: tRNA pseudouridine synthase B (285 aa).

Catalysis depends on D38, which acts as the Nucleophile.

Belongs to the pseudouridine synthase TruB family. Type 1 subfamily.

It carries out the reaction uridine(55) in tRNA = pseudouridine(55) in tRNA. Functionally, responsible for synthesis of pseudouridine from uracil-55 in the psi GC loop of transfer RNAs. The sequence is that of tRNA pseudouridine synthase B from Geobacillus kaustophilus (strain HTA426).